Consider the following 143-residue polypeptide: Transcriptional regulator SlyA (143 aa).

The HTH marR-type domain occupies Glu2–Lys135. The H-T-H motif DNA-binding region spans Gln49 to Glu72.

The protein belongs to the SlyA family. In terms of assembly, homodimer.

Its function is as follows. Transcription regulator that can specifically activate or repress expression of target genes. This Yersinia pestis bv. Antiqua (strain Antiqua) protein is Transcriptional regulator SlyA.